Here is a 170-residue protein sequence, read N- to C-terminus: Adenine phosphoribosyltransferase (170 aa).

Belongs to the purine/pyrimidine phosphoribosyltransferase family. Homodimer.

It localises to the cytoplasm. It catalyses the reaction AMP + diphosphate = 5-phospho-alpha-D-ribose 1-diphosphate + adenine. It participates in purine metabolism; AMP biosynthesis via salvage pathway; AMP from adenine: step 1/1. Catalyzes a salvage reaction resulting in the formation of AMP, that is energically less costly than de novo synthesis. In Mycoplasmopsis agalactiae (strain NCTC 10123 / CIP 59.7 / PG2) (Mycoplasma agalactiae), this protein is Adenine phosphoribosyltransferase.